The primary structure comprises 1173 residues: SMC5-SMC6 complex localization factor protein 2 (1173 aa).

Positions 1–109 (MTRRCMPARP…KPKRVPPEKS (109 aa)) are disordered. 2 stretches are compositionally biased toward basic and acidic residues: residues 39-50 (KRTESPGDRKQS) and 88-106 (QFERKLSSPKESKPKRVPP). The APIM motif motif lies at 137-149 (SLASKYLAKGTNI). Disordered regions lie at residues 161–230 (MKSL…PEES), 256–275 (QMEQRINSENSFSEASSLSL), 280–373 (ERKY…QKEK), 394–620 (KEPS…EEET), and 635–663 (TPAATGKPPALSKGLRSQSSDYTGHVHPG). Positions 181 to 199 (ENNEKNDRDRGKTNADSKK) are enriched in basic and acidic residues. Composition is skewed to low complexity over residues 212 to 221 (SSRSLSSRSS) and 262 to 275 (NSENSFSEASSLSL). The segment covering 280–293 (ERKYKPRQEQRKQN) has biased composition (basic and acidic residues). Residues 317 to 330 (SDSWEPTSAGSKQN) are compositionally biased toward polar residues. 2 stretches are compositionally biased toward basic and acidic residues: residues 339–349 (NSVDSDLKSTR) and 355–373 (KARESFLEKRPDGPHQKEK). Positions 409–428 (PSNSGNSGHHSTRNSDQIQV) are enriched in polar residues. The residue at position 481 (S481) is a Phosphoserine. The span at 499–520 (SKKDKERSSSKECSGHSTESTK) shows a compositional bias: basic and acidic residues. The span at 571–592 (APSDKAPSEGESSGNSNAGSSA) shows a compositional bias: low complexity. Over residues 602-619 (DSDEESLGYNLDSDEEEE) the composition is skewed to acidic residues. Residues S603, S607, and S614 each carry the phosphoserine modification. The tract at residues 635 to 1173 (TPAATGKPPA…QLHDFWVPDS (539 aa)) is interaction with SIMC1. An NSE6-like domain region spans residues 664–1166 (TYTNTLERLV…NCRPTQGQLH (503 aa)). The tract at residues 702–1173 (PIRIGEEDST…QLHDFWVPDS (472 aa)) is required for interaction with SLF1 and RAD18.

This sequence belongs to the FAM178 family. As to quaternary structure, forms a heterodimer with SIMC1. Interacts with SLF1 (via N-terminus); this interaction links RAD18 to the SMC5-SMC6 complex. Interacts with RAD18; this interaction is increased in a SLF1-dependent manner. Interacts with SMC5 and SMC6. In terms of tissue distribution, widely expressed. Expressed at higher level in skeletal muscle and at slightly lower level in brain, liver and heart, than in lung, kidney, spleen and thymus.

The protein resides in the nucleus. The protein localises to the PML body. Functionally, plays a role in the DNA damage response (DDR) pathway by regulating postreplication repair of UV-damaged DNA and genomic stability maintenance. The SLF1-SLF2 complex acts to link RAD18 with the SMC5-SMC6 complex at replication-coupled interstrand cross-links (ICL) and DNA double-strand breaks (DSBs) sites on chromatin during DNA repair in response to stalled replication forks. Promotes the recruitment of the SMC5-SMC6 complex to DNA lesions. Plays a role in SMC5-SMC6 complex recruitment for viral restriction. Forms a complex with SIMC1 and this complex is required to recruit SMC5-SMC6 complex to PML nuclear bodies and sites of viral replication. This Homo sapiens (Human) protein is SMC5-SMC6 complex localization factor protein 2.